A 452-amino-acid polypeptide reads, in one-letter code: MKQTFRFIKPIERITHLKPNATMMLFLASVLAVIMANSSLSTIYHEILEYPINLTIGGHEVFSHHGETMTLLQFVNDVLMVIFFLAVGLEIKQEILVGELSSFKKAMLPIVGAIGGMIVPVLFFLLVVHEGPGARGAAIPMSTDIAFALAALAVLGSRVPASLKVFLTALAVADDIGGIIVIALFYSSHINIGMLAIAFGILFIMYLMGRMHVSNLGLYFVCTFFVWLFFLQSGIHTTIAGVLAAFMIPARPGLHAKNLRAEMRSLFEAMPNDKIRQSGSSLILSHNQINVINSMRKIARKAISPMQLMEEYLSPIVGYFVLPLFAFANAGITLGGVTADALWGVPMAVFLGLFVGKPLGIYFFTYGFVKMRLCPWPEGMSRLNLMAVSLFGGIGFTVSLFIATLSYAGAEHLLFLNEAKLGIFVASIFAAVVGIVTLRYELNLENAKAQKS.

A run of 11 helical transmembrane segments spans residues 23-43 (MMLF…LSTI), 71-91 (LLQF…GLEI), 108-128 (LPIV…LLVV), 136-156 (GAAI…AVLG), 165-185 (VFLT…IALF), 189-209 (HINI…YLMG), 216-236 (LGLY…SGIH), 316-336 (IVGY…TLGG), 349-369 (VFLG…YGFV), 385-405 (LMAV…IATL), and 418-438 (EAKL…IVTL).

The protein belongs to the NhaA Na(+)/H(+) (TC 2.A.33) antiporter family.

The protein localises to the cell inner membrane. The catalysed reaction is Na(+)(in) + 2 H(+)(out) = Na(+)(out) + 2 H(+)(in). Na(+)/H(+) antiporter that extrudes sodium in exchange for external protons. The chain is Na(+)/H(+) antiporter NhaA from Porphyromonas gingivalis (strain ATCC 33277 / DSM 20709 / CIP 103683 / JCM 12257 / NCTC 11834 / 2561).